The following is a 208-amino-acid chain: Uridine kinase (208 aa).

Position 11–18 (11–18 (GGSGSGKT)) interacts with ATP.

It belongs to the uridine kinase family.

It is found in the cytoplasm. It carries out the reaction uridine + ATP = UMP + ADP + H(+). It catalyses the reaction cytidine + ATP = CMP + ADP + H(+). It functions in the pathway pyrimidine metabolism; CTP biosynthesis via salvage pathway; CTP from cytidine: step 1/3. Its pathway is pyrimidine metabolism; UMP biosynthesis via salvage pathway; UMP from uridine: step 1/1. The sequence is that of Uridine kinase from Staphylococcus carnosus (strain TM300).